Consider the following 224-residue polypeptide: Large ribosomal subunit protein uL1c (224 aa).

This sequence belongs to the universal ribosomal protein uL1 family. In terms of assembly, part of the 50S ribosomal subunit.

It localises to the plastid. The protein resides in the chloroplast. Functionally, binds directly to 23S rRNA. Might be involved in E site tRNA release (Potential). The sequence is that of Large ribosomal subunit protein uL1c (rpl1) from Cyanidioschyzon merolae (strain NIES-3377 / 10D) (Unicellular red alga).